The chain runs to 512 residues: Chlorogenic acid esterase (512 aa).

The first 18 residues, 1 to 18, serve as a signal peptide directing secretion; it reads MLLRLCIIATLLVSHCVA. N-linked (GlcNAc...) asparagine glycosylation is found at Asn-47, Asn-80, and Asn-98. A disulfide bridge connects residues Cys-92 and Cys-120. Ser-230 functions as the Acyl-ester intermediate in the catalytic mechanism. Residue Asn-271 is glycosylated (N-linked (GlcNAc...) asparagine). Cys-281 and Cys-292 form a disulfide bridge. N-linked (GlcNAc...) asparagine glycosylation is found at Asn-295, Asn-322, and Asn-328. Glu-351 functions as the Charge relay system in the catalytic mechanism. N-linked (GlcNAc...) asparagine glycans are attached at residues Asn-391 and Asn-402. The active-site Charge relay system is His-416. The N-linked (GlcNAc...) asparagine glycan is linked to Asn-474.

It belongs to the type-B carboxylesterase/lipase family.

It is found in the secreted. The enzyme catalyses chlorogenate + H2O = L-quinate + (E)-caffeate + H(+). Its function is as follows. Extracellular chlorogenic acid esterase that releases caffeic acid from chlorogenic acid (CGA) contained in natural substrates such as apple marc and coffee pulp. Shows no activity towards 5-O-p-coumaroyl quinic acid, another quinic ester derivative, and rosmarinic acid, another caffeic ester derivative. This is Chlorogenic acid esterase from Aspergillus niger.